A 613-amino-acid polypeptide reads, in one-letter code: Ribosome-associated molecular chaperone SSB1 (613 aa).

The nucleotide binding domain (NBD) stretch occupies residues 1–391 (MAEGVFSGAI…ILTGSNLSDD (391 aa)). ATP-binding positions include 16 to 18 (TTY), Lys73, 205 to 207 (GGT), 271 to 278 (ERAKRTLS), and Gly342. The interval 392-402 (TKDLLLLDVAP) is inter-domain linker. Positions 403-613 (LSLGVAMQGD…RVVTKAMATR (211 aa)) are substrate binding domain (SBD). Positions 516–612 (SEDIEKMVSQ…KRVVTKAMAT (97 aa)) are lid domain (SBDalpha). The short motif at 574–582 (VEAALADAF) is the Nuclear export signal element.

The protein belongs to the heat shock protein 70 family. Ssb-type Hsp70 subfamily. In terms of assembly, binds to ribosomes. Binds close to the ribosomal tunnel exit via contacts with both ribosomal proteins and rRNA. Directly interacts with nascent polypeptides. This interaction is dependent on the ribosome-associated complex (RAC). Interacts with SSE1. Interacts with FES1.

The protein localises to the cytoplasm. The enzyme catalyses ATP + H2O = ADP + phosphate + H(+). Functionally, ribosome-bound, Hsp70-type chaperone that assists in the cotranslational folding of newly synthesized proteins in the cytosol. Stimulates folding by interacting with nascent chains, binding to short, largely hydrophobic sequences exposed by unfolded proteins, thereby stabilizing longer, more slowly translated, and aggregation-prone nascent polypeptides and domains that cannot fold stably until fully synthesized. The Hsp70-protein substrate interaction depends on ATP-binding and on allosteric regulation between the NBD and the SBD. The ATP-bound state is characterized by a fast exchange rate of substrate (low affinity state), while in the ADP-bound state exchange is much slower (high affinity state). During the Hsp70 cycle, the chaperone switches between the ATP-bound state (open conformation) and the ADP-bound state (closed conformation) by major conformational rearrangements involving mainly the lid domain. Ssb cooperates with a specific Hsp40/Hsp70 co-chaperone termed the ribosome-associated complex (RAC), which stimulates the ATPase activity of the ribosome-associated pool of Ssbs and switches it to the high affinity substrate binding state. Hsp110 chaperone SSE1 and FES1 act as nucleotide exchange factors that cause substrate release. The protein is Ribosome-associated molecular chaperone SSB1 (SSB1) of Eremothecium gossypii (strain ATCC 10895 / CBS 109.51 / FGSC 9923 / NRRL Y-1056) (Yeast).